The primary structure comprises 138 residues: Centromere protein S (138 aa).

N-acetylmethionine is present on Met-1. The segment at 110–138 (RKAQKKKKSEDGSKNSRQPAEAGVVESEN) is disordered.

The protein belongs to the TAF9 family. CENP-S/MHF1 subfamily. In terms of assembly, heterodimer with CENPX, sometimes called MHF; this interaction stabilizes both partners. MHF heterodimers can assemble to form tetrameric structures. MHF also coassemble with CENPT-CENPW heterodimers at centromeres to form the tetrameric CENP-T-W-S-X complex. Forms a discrete complex with FANCM and CENPX, called FANCM-MHF; this interaction, probably mediated by direct binding between CENPS and FANCM, leads to synergistic activation of double-stranded DNA binding and strongly stimulates FANCM-mediated DNA remodeling. Recruited by FANCM to the Fanconi anemia (FA) core complex, which consists of CENPS, CENPX, FANCA, FANCB, FANCC, FANCE, FANCF, FANCG, FANCL, FANCM, FAAP24 and FAAP100. The FA core complex associates with Bloom syndrome (BLM) complex, which consists of at least BLM, DNA topoisomerase 3-alpha (TOP3A), RMI1/BLAP75, RPA1/RPA70 and RPA2/RPA32. The super complex between FA and BLM is called BRAFT. Component of the CENPA-CAD complex, composed of CENPI, CENPK, CENPL, CENPO, CENPP, CENPQ, CENPR and CENPS. The CENPA-CAD complex is probably recruited on centromeres by the CENPA-NAC complex, composed of at least CENPA, CENPC, CENPH, CENPM, CENPN, CENPT and CENPU. Ubiquitously expressed.

It is found in the nucleus. Its subcellular location is the chromosome. It localises to the centromere. The protein localises to the kinetochore. In terms of biological role, DNA-binding component of the Fanconi anemia (FA) core complex. Required for the normal activation of the FA pathway, leading to monoubiquitination of the FANCI-FANCD2 complex in response to DNA damage, cellular resistance to DNA cross-linking drugs, and prevention of chromosomal breakage. In complex with CENPX (MHF heterodimer), crucial cofactor for FANCM in both binding and ATP-dependent remodeling of DNA. Stabilizes FANCM. In complex with CENPX and FANCM (but not other FANC proteins), rapidly recruited to blocked forks and promotes gene conversion at blocked replication forks. In complex with CENPT, CENPW and CENPX (CENP-T-W-S-X heterotetramer), involved in the formation of a functional kinetochore outer plate, which is essential for kinetochore-microtubule attachment and faithful mitotic progression. As a component of MHF and CENP-T-W-S-X complexes, binds DNA and bends it to form a nucleosome-like structure. DNA-binding function is fulfilled in the presence of CENPX, with the following preference for DNA substates: Holliday junction &gt; double-stranded &gt; splay arm &gt; single-stranded. Does not bind DNA on its own. The polypeptide is Centromere protein S (CENPS) (Homo sapiens (Human)).